Consider the following 453-residue polypeptide: DNA repair protein RadA (453 aa).

The segment at 10–27 (CQECGYQSPKYLGRCPNC) adopts a C4-type zinc-finger fold. Residue 95–102 (GDPGIGKS) participates in ATP binding. A RadA KNRFG motif motif is present at residues 251-255 (KNRFG). The interval 350 to 453 (DAYLKSAGGV…VGQVLNAVFS (104 aa)) is lon-protease-like.

Belongs to the RecA family. RadA subfamily.

In terms of biological role, DNA-dependent ATPase involved in processing of recombination intermediates, plays a role in repairing DNA breaks. Stimulates the branch migration of RecA-mediated strand transfer reactions, allowing the 3' invading strand to extend heteroduplex DNA faster. Binds ssDNA in the presence of ADP but not other nucleotides, has ATPase activity that is stimulated by ssDNA and various branched DNA structures, but inhibited by SSB. Does not have RecA's homology-searching function. The sequence is that of DNA repair protein RadA from Streptococcus pyogenes serotype M1.